Consider the following 989-residue polypeptide: Cellulose synthase A catalytic subunit 4 [UDP-forming] (989 aa).

Residues 1–184 lie on the Cytoplasmic side of the membrane; the sequence is MMESGVPPCA…SRIIPISKNK (184 aa). Positions 9, 12, 20, 23, 28, 31, 43, and 46 each coordinate Zn(2+). The RING-type; degenerate zinc finger occupies 9 to 47; it reads CAACGDDAHAACRACSYALCKACLDEDAAEGRTTCARCG. Residues 138–149 are compositionally biased toward basic residues; it reads KKEKKASAKKAA. The interval 138–158 is disordered; the sequence is KKEKKASAKKAAAKAQAPPVE. Residues 185-205 traverse the membrane as a helical segment; it reads LTPYRAVIIMRLVVLGLFFHY. Residues 206-213 are Extracellular-facing; the sequence is RITNPVYS. A helical transmembrane segment spans residues 214–234; that stretch reads AFGLWMTSVICEIWFGFSWIL. The Cytoplasmic portion of the chain corresponds to 235–772; that stretch reads DQFPKWCPIN…INTIVYPFTS (538 aa). UDP-alpha-D-glucose is bound by residues serine 272, lysine 278, glutamate 279, and aspartate 308. Aspartate 308 is an active-site residue. A coiled-coil region spans residues 362–389; it reads VKERRAMKRDYEEYKVRINALVAKAQKT. Lysine 449 is a UDP-alpha-D-glucose binding site. 2 residues coordinate Mn(2+): lysine 450 and aspartate 474. Residue aspartate 688 is part of the active site. A helical transmembrane segment spans residues 773-793; the sequence is LPLIAYCCLPAICLLTGKFII. Over 794–798 the chain is Extracellular; it reads PTLSN. A helical transmembrane segment spans residues 799-819; it reads AATIWFLGLFISIIVTSVLEL. Topologically, residues 820 to 835 are cytoplasmic; sequence RWSGIGIEDWWRNEQF. The helical transmembrane segment at 836 to 856 threads the bilayer; the sequence is WVIGGVSAHLFAVFQGILKMI. The Extracellular segment spans residues 857–884; that stretch reads AGLDTNFTVTAKATDDTEFGELYVFKWT. A glycan (N-linked (GlcNAc...) asparagine) is linked at asparagine 862. Residues 885 to 905 form a helical membrane-spanning segment; that stretch reads TVLIPPTSILVLNLVGVVAGF. The Cytoplasmic portion of the chain corresponds to 906 to 916; sequence SDALNSGYESW. The helical transmembrane segment at 917 to 937 threads the bilayer; it reads GPLFGKVFFAMWVIMHLYPFL. Over 938–946 the chain is Extracellular; that stretch reads KGLMGRQNR. A helical membrane pass occupies residues 947-967; that stretch reads TPTIVVLWSVLLASVFSLLWV. At 968 to 989 the chain is on the cytoplasmic side; that stretch reads KIDPFIGSSETTTTNSCANFDC.

It belongs to the glycosyltransferase 2 family. Plant cellulose synthase subfamily. Requires Mn(2+) as cofactor. It depends on Zn(2+) as a cofactor.

It localises to the cell membrane. The catalysed reaction is [(1-&gt;4)-beta-D-glucosyl](n) + UDP-alpha-D-glucose = [(1-&gt;4)-beta-D-glucosyl](n+1) + UDP + H(+). The protein operates within glycan metabolism; plant cellulose biosynthesis. Functionally, catalytic subunit of cellulose synthase terminal complexes ('rosettes'), required for beta-1,4-glucan microfibril crystallization, a major mechanism of the cell wall formation. Involved in the secondary cell wall formation. This is Cellulose synthase A catalytic subunit 4 [UDP-forming] (CESA4) from Oryza sativa subsp. japonica (Rice).